We begin with the raw amino-acid sequence, 245 residues long: UDP-N-acetyl-D-mannosaminuronic acid transferase (245 aa).

The protein belongs to the glycosyltransferase 26 family.

It catalyses the reaction UDP-N-acetyl-alpha-D-mannosaminouronate + N-acetyl-alpha-D-glucosaminyl-di-trans,octa-cis-undecaprenyl diphosphate = beta-D-ManNAcA-(1-&gt;4)-alpha-D-GlcNAc-di-trans,octa-cis-undecaprenyl diphosphate + UDP + H(+). Its pathway is bacterial outer membrane biogenesis; enterobacterial common antigen biosynthesis. Functionally, catalyzes the synthesis of Und-PP-GlcNAc-ManNAcA (Lipid II), the second lipid-linked intermediate involved in enterobacterial common antigen (ECA) synthesis. In Proteus mirabilis (strain HI4320), this protein is UDP-N-acetyl-D-mannosaminuronic acid transferase.